The sequence spans 197 residues: CRISPR system CMR subunit Cmr7 1 (197 aa).

This sequence belongs to the CRISPR system Cmr7 family. As to quaternary structure, possible homodimer. Part of the CMR ribonucleoprotein complex, consisting of crRNA plus Cmr1/Cmr2/Cmr3/Cmr4/Cmr5/Cmr6 at 1:1 and possibly 3 Cmr7 dimers. A Cmr2/Cmr3/Cmr7 subcomplex without crRNA can also be isolated. It does not cleave target RNA.

It is found in the cytoplasm. CRISPR (clustered regularly interspaced short palindromic repeat) is an adaptive immune system that provides protection against mobile genetic elements (viruses, transposable elements and conjugative plasmids). CRISPR clusters contain spacers, sequences complementary to antecedent mobile elements, and target invading nucleic acids. CRISPR clusters are transcribed and processed into CRISPR RNA (crRNA). The CMR complex degrades RNA complementary to the crRNA (target RNA) within UA dinucleotides, generating 3'-OH and 5'-phosphate ends. Activity is dependent on the 8 nt long 5' tag in the crRNA, an unpaired 3' flag on the target RNA, and is stimulated by ATP. Some cleavage of the guide crRNA can also be observed. The protein is CRISPR system CMR subunit Cmr7 1 (cmr7A) of Saccharolobus solfataricus (strain ATCC 35092 / DSM 1617 / JCM 11322 / P2) (Sulfolobus solfataricus).